The sequence spans 381 residues: Queuine tRNA-ribosyltransferase (381 aa).

Asp-96 functions as the Proton acceptor in the catalytic mechanism. Residues 96 to 100 (DSGGF), Asp-150, Gln-193, and Gly-220 each bind substrate. The segment at 251-257 (GVGSPDS) is RNA binding. Catalysis depends on Asp-270, which acts as the Nucleophile. Residues 275 to 279 (TRIAR) form an RNA binding; important for wobble base 34 recognition region. The Zn(2+) site is built by Cys-308, Cys-310, Cys-313, and His-339.

It belongs to the queuine tRNA-ribosyltransferase family. As to quaternary structure, homodimer. Within each dimer, one monomer is responsible for RNA recognition and catalysis, while the other monomer binds to the replacement base PreQ1. It depends on Zn(2+) as a cofactor.

The catalysed reaction is 7-aminomethyl-7-carbaguanine + guanosine(34) in tRNA = 7-aminomethyl-7-carbaguanosine(34) in tRNA + guanine. The protein operates within tRNA modification; tRNA-queuosine biosynthesis. Functionally, catalyzes the base-exchange of a guanine (G) residue with the queuine precursor 7-aminomethyl-7-deazaguanine (PreQ1) at position 34 (anticodon wobble position) in tRNAs with GU(N) anticodons (tRNA-Asp, -Asn, -His and -Tyr). Catalysis occurs through a double-displacement mechanism. The nucleophile active site attacks the C1' of nucleotide 34 to detach the guanine base from the RNA, forming a covalent enzyme-RNA intermediate. The proton acceptor active site deprotonates the incoming PreQ1, allowing a nucleophilic attack on the C1' of the ribose to form the product. After dissociation, two additional enzymatic reactions on the tRNA convert PreQ1 to queuine (Q), resulting in the hypermodified nucleoside queuosine (7-(((4,5-cis-dihydroxy-2-cyclopenten-1-yl)amino)methyl)-7-deazaguanosine). The polypeptide is Queuine tRNA-ribosyltransferase (Bacillus licheniformis (strain ATCC 14580 / DSM 13 / JCM 2505 / CCUG 7422 / NBRC 12200 / NCIMB 9375 / NCTC 10341 / NRRL NRS-1264 / Gibson 46)).